Consider the following 171-residue polypeptide: uncharacterized protein (171 aa).

Residues 30–97 (AGRVSAAYHA…PKKGIIICAL (68 aa)) enclose the HTH gntR-type domain. The segment at residues 57–76 (EIEIARQLGMSRTPVHEAMA) is a DNA-binding region (H-T-H motif).

This is an uncharacterized protein from Agrobacterium vitis (Rhizobium vitis).